A 203-amino-acid polypeptide reads, in one-letter code: Peptide deformylase (203 aa).

Residues C121 and H163 each coordinate Fe cation. Residue E164 is part of the active site. H167 serves as a coordination point for Fe cation.

This sequence belongs to the polypeptide deformylase family. Fe(2+) serves as cofactor.

It catalyses the reaction N-terminal N-formyl-L-methionyl-[peptide] + H2O = N-terminal L-methionyl-[peptide] + formate. Functionally, removes the formyl group from the N-terminal Met of newly synthesized proteins. Requires at least a dipeptide for an efficient rate of reaction. N-terminal L-methionine is a prerequisite for activity but the enzyme has broad specificity at other positions. The chain is Peptide deformylase from Prochlorococcus marinus (strain SARG / CCMP1375 / SS120).